A 598-amino-acid polypeptide reads, in one-letter code: Elongation factor 4 (598 aa).

The tr-type G domain occupies 2–184; sequence QHIRNFSIIA…AIVARVPAPK (183 aa). GTP-binding positions include 14 to 19 and 131 to 134; these read DHGKST and NKID.

The protein belongs to the TRAFAC class translation factor GTPase superfamily. Classic translation factor GTPase family. LepA subfamily.

The protein resides in the cell inner membrane. The catalysed reaction is GTP + H2O = GDP + phosphate + H(+). Functionally, required for accurate and efficient protein synthesis under certain stress conditions. May act as a fidelity factor of the translation reaction, by catalyzing a one-codon backward translocation of tRNAs on improperly translocated ribosomes. Back-translocation proceeds from a post-translocation (POST) complex to a pre-translocation (PRE) complex, thus giving elongation factor G a second chance to translocate the tRNAs correctly. Binds to ribosomes in a GTP-dependent manner. The chain is Elongation factor 4 from Azoarcus sp. (strain BH72).